The following is a 412-amino-acid chain: NADH-ubiquinone oxidoreductase 49 kDa subunit (412 aa).

The protein belongs to the complex I 49 kDa subunit family.

The protein localises to the hydrogenosome. The catalysed reaction is a ubiquinone + NADH + 5 H(+)(in) = a ubiquinol + NAD(+) + 4 H(+)(out). Transfer of electrons from NADH to the respiratory chain. The immediate electron acceptor for the enzyme is believed to be ubiquinone. Component of the iron-sulfur (IP) fragment of the enzyme. This Nyctotherus ovalis protein is NADH-ubiquinone oxidoreductase 49 kDa subunit (nad7).